Here is a 156-residue protein sequence, read N- to C-terminus: Putative HTH-type transcriptional regulator YwgB (156 aa).

Residues 2–133 form the HTH rrf2-type domain; it reads KMKSGMEQAV…REESLQHVMD (132 aa).

The chain is Putative HTH-type transcriptional regulator YwgB (ywgB) from Bacillus subtilis (strain 168).